A 347-amino-acid chain; its full sequence is Protein N-terminal asparagine amidohydrolase (347 aa).

It catalyses the reaction N-terminal L-asparaginyl-[protein] + H2O + H(+) = N-terminal L-aspartyl-[protein] + NH4(+). N-terminal asparagine deamidase that mediates deamidation of N-terminal asparagine residues to aspartate. Required for the ubiquitin-dependent turnover of intracellular proteins that initiate with Met-Asn. These proteins are acetylated on the retained initiator methionine and can subsequently be modified by the removal of N-acetyl methionine by acylaminoacid hydrolase (AAH). Conversion of the resulting N-terminal asparagine to aspartate by NTAN1 renders the protein susceptible to arginylation, polyubiquitination and degradation as specified by the N-end rule. This enzyme does not act on substrates with internal or C-terminal asparagines and does not act on glutamine residues in any position. Does not seem to be involved in immune response, unlike the N-terminal glutamine amidohydrolase NTAQ1. In Arabidopsis thaliana (Mouse-ear cress), this protein is Protein N-terminal asparagine amidohydrolase.